A 148-amino-acid chain; its full sequence is uncharacterized protein (148 aa).

Disordered stretches follow at residues 1 to 86 (MCPP…VQSP) and 122 to 148 (RAHR…TSPC). Residues 38 to 57 (RPPKMQRRPRPPVAKRRRFP) are compositionally biased toward basic residues. Residues 134 to 148 (QSRQRPSPDSQTSPC) are compositionally biased toward polar residues.

Belongs to the Epstein-Barr virus BLLF2 family.

This is an uncharacterized protein from Homo sapiens (Human).